A 141-amino-acid chain; its full sequence is ATP synthase epsilon chain (141 aa).

The protein belongs to the ATPase epsilon chain family. As to quaternary structure, F-type ATPases have 2 components, CF(1) - the catalytic core - and CF(0) - the membrane proton channel. CF(1) has five subunits: alpha(3), beta(3), gamma(1), delta(1), epsilon(1). CF(0) has three main subunits: a, b and c.

It localises to the cell inner membrane. Its function is as follows. Produces ATP from ADP in the presence of a proton gradient across the membrane. This is ATP synthase epsilon chain from Bordetella petrii (strain ATCC BAA-461 / DSM 12804 / CCUG 43448).